Reading from the N-terminus, the 281-residue chain is TIP41-like protein (281 aa).

It belongs to the TIP41 family.

The sequence is that of TIP41-like protein from Caenorhabditis elegans.